Reading from the N-terminus, the 159-residue chain is Transcriptional repressor NrdR (159 aa).

The segment at Cys3–Cys34 is a zinc-finger region. Residues Pro49–Glu139 form the ATP-cone domain.

The protein belongs to the NrdR family. The cofactor is Zn(2+).

Functionally, negatively regulates transcription of bacterial ribonucleotide reductase nrd genes and operons by binding to NrdR-boxes. The protein is Transcriptional repressor NrdR of Burkholderia vietnamiensis (strain G4 / LMG 22486) (Burkholderia cepacia (strain R1808)).